We begin with the raw amino-acid sequence, 421 residues long: Outer capsid protein P8 (421 aa).

Belongs to the phytoreovirus outer capsid protein P8 family. In terms of assembly, homotrimer. Homomultimer. Interacts with host peroxisomal glycolate oxidase (GOX). This interaction mediates its relocation to virus factories peripheral to host peroxisomes.

Its subcellular location is the virion. It is found in the host cytoplasm. Its function is as follows. Capsid protein which self-assembles to form the outer icosahedral capsid with a T=13 symmetry, about 70 nm in diameter and consisting of 780 molecules capsid proteins. This Alopecurus aequalis (Barnyard grass) protein is Outer capsid protein P8.